We begin with the raw amino-acid sequence, 297 residues long: GTP cyclohydrolase FolE2 (297 aa).

The protein belongs to the GTP cyclohydrolase IV family.

The enzyme catalyses GTP + H2O = 7,8-dihydroneopterin 3'-triphosphate + formate + H(+). It participates in cofactor biosynthesis; 7,8-dihydroneopterin triphosphate biosynthesis; 7,8-dihydroneopterin triphosphate from GTP: step 1/1. In terms of biological role, converts GTP to 7,8-dihydroneopterin triphosphate. The chain is GTP cyclohydrolase FolE2 from Pseudomonas fluorescens (strain ATCC BAA-477 / NRRL B-23932 / Pf-5).